Here is a 272-residue protein sequence, read N- to C-terminus: Shikimate dehydrogenase (NADP(+)) (272 aa).

Shikimate contacts are provided by residues 14-16 (SKS) and threonine 61. The active-site Proton acceptor is lysine 65. Glutamate 77 contacts NADP(+). Shikimate is bound by residues asparagine 86 and aspartate 102. Residues 126–130 (GAGGA), 149–154 (NRTVSR), and methionine 213 contribute to the NADP(+) site. Tyrosine 215 contacts shikimate. Glycine 237 is an NADP(+) binding site.

It belongs to the shikimate dehydrogenase family. As to quaternary structure, homodimer.

It carries out the reaction shikimate + NADP(+) = 3-dehydroshikimate + NADPH + H(+). Its pathway is metabolic intermediate biosynthesis; chorismate biosynthesis; chorismate from D-erythrose 4-phosphate and phosphoenolpyruvate: step 4/7. Involved in the biosynthesis of the chorismate, which leads to the biosynthesis of aromatic amino acids. Catalyzes the reversible NADPH linked reduction of 3-dehydroshikimate (DHSA) to yield shikimate (SA). This chain is Shikimate dehydrogenase (NADP(+)), found in Shigella boydii serotype 18 (strain CDC 3083-94 / BS512).